The chain runs to 509 residues: MANQHFAKEAPETYWKTSTDLPSFPALQEDTECDVTIIGGGITGITTAYELTKRGFRVVLIEANQVLNGTTAHTTAKVTAQHDMIYDEFIRHFGLNHARLYYEANQNAIDYIKGIVDEHQIDCEWIEQDAYLYTANENAVQKIHTEHEAYTKLGIERDLIKDLPIPLGSKLALVMKNQAQFHPLQYLKALLEQIVQKGGRIYEETVALDIKKGERPEVVTKSRHAIKSRFIICCSHFPFYDGGGLYAARMYSDRSYVLAIKPKIEYPEGMYLSIDQPSVALRYTVVNGEKLILFSGVSHKTGQGKAMSTHYETLRQLAESTIGIESIPYYWSTQDLVTIDKIPFIGPMSENEDNILVATGFKKWGMTSSAVAATLLSDLVEKKENPYESIFTPSRFHLNPGLQKVISYNADVAKHLIKGKLEKPDVQFEDISPGEGKAVTINGRRAGAFRDETGCLHLVDTTCTHLGCEVEWNDSEHTWDCPCHGSRFKPSGEVVEGPAIKPLKQIDLD.

One can recognise a Rieske domain in the interval 423-509 (KPDVQFEDIS…IKPLKQIDLD (87 aa)). [2Fe-2S] cluster-binding residues include cysteine 463, histidine 465, cysteine 481, and histidine 484. Residues cysteine 468 and cysteine 483 are joined by a disulfide bond.

It belongs to the Rieske iron-sulfur protein family. Requires [2Fe-2S] cluster as cofactor.

The sequence is that of Putative Rieske 2Fe-2S iron-sulfur protein YhfW (yhfW) from Bacillus subtilis (strain 168).